A 163-amino-acid polypeptide reads, in one-letter code: MLKRSLLFLTVLLLLFSFSSITNEVSASSSFDKGKYKKGDDASYFEPTGPYLMVNVTGVDGKGNELLSPHYVEFPIKPGTTLTKEKIEYYVEWALDATAYKEFRVVELDPSAKIEVTYYDKNKKKEETKSFPITEKGFVVPDLSEHIKNPGFNLITKVIIEKK.

The first 27 residues, 1–27, serve as a signal peptide directing secretion; it reads MLKRSLLFLTVLLLLFSFSSITNEVSA.

This sequence belongs to the staphylokinase family.

It is found in the secreted. Potent plasminogen activator that converts plasminogen into plasmin. It forms a 1:1 complex with plasmin, which in turn activates other plasminogen molecules. This Staphylococcus phage phi13 (Bacteriophage phi-13) protein is Staphylokinase (sak).